Reading from the N-terminus, the 227-residue chain is Nucleoside triphosphate pyrophosphatase (227 aa).

Catalysis depends on D77, which acts as the Proton acceptor.

It belongs to the Maf family. Requires a divalent metal cation as cofactor.

It is found in the cytoplasm. It catalyses the reaction a ribonucleoside 5'-triphosphate + H2O = a ribonucleoside 5'-phosphate + diphosphate + H(+). The catalysed reaction is a 2'-deoxyribonucleoside 5'-triphosphate + H2O = a 2'-deoxyribonucleoside 5'-phosphate + diphosphate + H(+). Its function is as follows. Nucleoside triphosphate pyrophosphatase. May have a dual role in cell division arrest and in preventing the incorporation of modified nucleotides into cellular nucleic acids. This is Nucleoside triphosphate pyrophosphatase from Rickettsia typhi (strain ATCC VR-144 / Wilmington).